The primary structure comprises 57 residues: uncharacterized protein (57 aa).

This is an uncharacterized protein from Dictyostelium discoideum (Social amoeba).